A 212-amino-acid polypeptide reads, in one-letter code: Entry-fusion complex associated protein OPG083 (212 aa).

Residues 1–175 lie on the Virion surface side of the membrane; sequence MAETKEFKTL…IIENRLPYYD (175 aa). Intrachain disulfides connect C33/C55, C47/C127, and C107/C149. Residues 176 to 196 traverse the membrane as a helical segment; that stretch reads PWFLVGVAIILVIFTVAICSI. Over 197 to 212 the chain is Intravirion; it reads RRNLALKYRYGTFLYV.

This sequence belongs to the orthopoxvirus OPG053 family. Component of the entry fusion complex (EFC) composed of OPG053/F9, OPG076/O3, OPG086/G3, OPG094/G9, OPG095/L1, OPG099/L5, OPG107/H2, OPG143/A16, OPG104/J5, OPG147/A21 and OPG155/A28. Except for OPG095/L1 and OPG052/F9, each of the EFC proteins is required for assembly or stability of the complex. In terms of processing, disulfid bonds are oxidized in the cytoplasm by OPG088 protein. Post-translationally, unglycosylated because produced in viral factories instead of the classic ER -Golgi route.

It is found in the virion membrane. In terms of biological role, component of the entry fusion complex (EFC), which consists of 11 proteins. During cell infection, this complex mediates entry of the virion core into the host cytoplasm by a two-step mechanism consisting of lipid mixing of the viral and cellular membranes and subsequent pore formation. The protein is Entry-fusion complex associated protein OPG083 (OPG053) of Vaccinia virus (strain Western Reserve) (VACV).